Here is a 388-residue protein sequence, read N- to C-terminus: Mannitol-1-phosphate 5-dehydrogenase (388 aa).

5–16 (AIQFGGGNIGRG) contacts NAD(+). Lys213 is a catalytic residue.

It belongs to the mannitol dehydrogenase family. In terms of assembly, monomer.

The enzyme catalyses D-mannitol 1-phosphate + NAD(+) = beta-D-fructose 6-phosphate + NADH + H(+). Its function is as follows. Catalyzes the NAD(H)-dependent interconversion of D-fructose 6-phosphate and D-mannitol 1-phosphate in the mannitol metabolic pathway. In Neosartorya fischeri (strain ATCC 1020 / DSM 3700 / CBS 544.65 / FGSC A1164 / JCM 1740 / NRRL 181 / WB 181) (Aspergillus fischerianus), this protein is Mannitol-1-phosphate 5-dehydrogenase (mpdA).